The chain runs to 196 residues: ATP-dependent Clp protease proteolytic subunit (196 aa).

The Nucleophile role is filled by S101. Residue H126 is part of the active site.

It belongs to the peptidase S14 family. As to quaternary structure, component of the chloroplastic Clp protease core complex.

The protein localises to the plastid. It localises to the chloroplast stroma. The enzyme catalyses Hydrolysis of proteins to small peptides in the presence of ATP and magnesium. alpha-casein is the usual test substrate. In the absence of ATP, only oligopeptides shorter than five residues are hydrolyzed (such as succinyl-Leu-Tyr-|-NHMec, and Leu-Tyr-Leu-|-Tyr-Trp, in which cleavage of the -Tyr-|-Leu- and -Tyr-|-Trp bonds also occurs).. Its function is as follows. Cleaves peptides in various proteins in a process that requires ATP hydrolysis. Has a chymotrypsin-like activity. Plays a major role in the degradation of misfolded proteins. The sequence is that of ATP-dependent Clp protease proteolytic subunit from Barbarea verna (Land cress).